Consider the following 463-residue polypeptide: Cysteine--tRNA ligase (463 aa).

Residue Cys33 participates in Zn(2+) binding. Residues 35–45 carry the 'HIGH' region motif; the sequence is PTVYDFAHIGN. Positions 221, 246, and 250 each coordinate Zn(2+). The 'KMSKS' region signature appears at 279–283; sequence KMSKS. An ATP-binding site is contributed by Lys282.

It belongs to the class-I aminoacyl-tRNA synthetase family. As to quaternary structure, monomer. Requires Zn(2+) as cofactor.

Its subcellular location is the cytoplasm. It catalyses the reaction tRNA(Cys) + L-cysteine + ATP = L-cysteinyl-tRNA(Cys) + AMP + diphosphate. The protein is Cysteine--tRNA ligase of Rhizobium rhizogenes (strain K84 / ATCC BAA-868) (Agrobacterium radiobacter).